Here is a 341-residue protein sequence, read N- to C-terminus: Syntaxin-122 (341 aa).

Position 1 is an N-acetylmethionine (methionine 1). Disordered regions lie at residues 1-22 (MNDL…PPHS) and 111-137 (LDRA…RTSV). Over 1–284 (MNDLLSGSFK…ARFYQKNTRK (284 aa)) the chain is Cytoplasmic. Composition is skewed to polar residues over residues 8–21 (SFKT…SPPH) and 126–137 (PGSSSDRQRTSV). Residues 64–185 (CHNLRSSNEQ…GEYPDEATLE (122 aa)) adopt a coiled-coil conformation. The 63-residue stretch at 213-275 (INEIQERHDA…RSGADRLVKA (63 aa)) folds into the t-SNARE coiled-coil homology domain. A helical; Anchor for type IV membrane protein membrane pass occupies residues 285–305 (WTCFAILLLLIIVVLIVVFTV). The Vesicular segment spans residues 306 to 341 (KPWESNGGGGGGAPRQATPVQAQPPPPPAVNRRLLR). The disordered stretch occupies residues 312 to 341 (GGGGGGAPRQATPVQAQPPPPPAVNRRLLR).

This sequence belongs to the syntaxin family. As to quaternary structure, part of the t-SNARE complex.

The protein resides in the membrane. Functionally, vesicle trafficking protein that functions in the secretory pathway. In Arabidopsis thaliana (Mouse-ear cress), this protein is Syntaxin-122 (SYP122).